Here is a 123-residue protein sequence, read N- to C-terminus: Small ribosomal subunit protein uS12 (123 aa).

The residue at position 89 (aspartate 89) is a 3-methylthioaspartic acid.

Belongs to the universal ribosomal protein uS12 family. Part of the 30S ribosomal subunit. Contacts proteins S8 and S17. May interact with IF1 in the 30S initiation complex.

With S4 and S5 plays an important role in translational accuracy. Its function is as follows. Interacts with and stabilizes bases of the 16S rRNA that are involved in tRNA selection in the A site and with the mRNA backbone. Located at the interface of the 30S and 50S subunits, it traverses the body of the 30S subunit contacting proteins on the other side and probably holding the rRNA structure together. The combined cluster of proteins S8, S12 and S17 appears to hold together the shoulder and platform of the 30S subunit. The chain is Small ribosomal subunit protein uS12 from Bradyrhizobium diazoefficiens (strain JCM 10833 / BCRC 13528 / IAM 13628 / NBRC 14792 / USDA 110).